The chain runs to 317 residues: MSSKTALLLLQMGGPDSLDAVHPFLMKLFTDRDIIKIGPAFLQPFIARRIVNKRAPKVEEYYRQIGGKSPIRELTEAQGEGLQQLLGEDFRSFVAMRYSRPSTIDALAAIKRAGIERVIALSLYPHYSRATTGSSVNELKRVLNESGAKFEISYIDRFYNHPLYIKALSEKVVQGLAAFPDSKDVEIVFSAHSLPQSFIEEGDPYLDHIQETVRLVMEQVGEGSHTLCFQSKASRVKWLEPSTEATIEQMAKAGKKNLLMVPLSFVSDHIETLYEIDIQYGEEAKALGIERFIRTESLNSSPLFLECLADLVKTAAK.

Fe cation contacts are provided by His192 and Glu271.

The protein belongs to the ferrochelatase family.

It is found in the cytoplasm. It carries out the reaction heme b + 2 H(+) = protoporphyrin IX + Fe(2+). The protein operates within porphyrin-containing compound metabolism; protoheme biosynthesis; protoheme from protoporphyrin-IX: step 1/1. Catalyzes the ferrous insertion into protoporphyrin IX. In Geobacter sp. (strain M21), this protein is Ferrochelatase.